Consider the following 325-residue polypeptide: Serine/threonine-protein kinase CtkA (325 aa).

Residues 21-24, K37, Q72, and 88-90 each bind ATP; these read NGNK and KDF. Residues N160 and D179 each contribute to the Mg(2+) site. Residue D179 coordinates ATP. Residues 296 to 325 are disordered; the sequence is QHKQAHSNPYDNADDLDNSNEYTPTPKRRR.

Post-translationally, autophosphorylates on either Thr-3 or Thr-7.

The protein resides in the secreted. It localises to the host cytoplasm. It is found in the host cytosol. The protein localises to the host nucleus. The catalysed reaction is L-seryl-[protein] + ATP = O-phospho-L-seryl-[protein] + ADP + H(+). The enzyme catalyses L-threonyl-[protein] + ATP = O-phospho-L-threonyl-[protein] + ADP + H(+). Functionally, virulence factor acting as a pro-inflammatory protein that induces the secretion of the pro-inflammatory cytokines TNF-alpha (tumor necrosis factor-alpha) and IL-8 (interleukin-8) from human macrophages, as well as enhanced translocation of the transcription factor NF-kappa-B complex in macrophages. Is a kinase capable of autophosphorylating itself at a threonine residue near the N-terminus. Also leads to enhanced phosphorylation of the NF-kappa-B p65 subunit (RELA) at 'Ser-276' in human epithelial cancer cells; its kinase activity is required for this enhanced phosphorylation that up-regulates NF-kappa-B activity, but it does not directly phosphorylate this protein. Thus, the kinase activity of CtkA may play an important role in the induction of host inflammatory responses during H.pylori infection. The chain is Serine/threonine-protein kinase CtkA (ctkA) from Helicobacter pylori (strain J99 / ATCC 700824) (Campylobacter pylori J99).